A 218-amino-acid chain; its full sequence is Adenylate kinase (218 aa).

Position 10–15 (10–15 (GAGKGT)) interacts with ATP. The tract at residues 30–59 (STGDIFREAIAKGTELGRKVQDIVNSGNLV) is NMP. AMP is bound by residues threonine 31, arginine 36, 57–59 (NLV), 85–88 (GYPR), and glutamine 92. The LID stretch occupies residues 126–163 (TRRVCSKCGKVYNVITLPSKVEGICDDCGGTLIQRDDD). Arginine 127 lines the ATP pocket. Residues cysteine 130 and cysteine 133 each coordinate Zn(2+). An ATP-binding site is contributed by 136–137 (VY). Cysteine 150 and cysteine 153 together coordinate Zn(2+). Arginine 160 and arginine 171 together coordinate AMP. Lysine 199 contacts ATP.

The protein belongs to the adenylate kinase family. As to quaternary structure, monomer.

The protein resides in the cytoplasm. It carries out the reaction AMP + ATP = 2 ADP. The protein operates within purine metabolism; AMP biosynthesis via salvage pathway; AMP from ADP: step 1/1. Functionally, catalyzes the reversible transfer of the terminal phosphate group between ATP and AMP. Plays an important role in cellular energy homeostasis and in adenine nucleotide metabolism. This chain is Adenylate kinase, found in Fervidobacterium nodosum (strain ATCC 35602 / DSM 5306 / Rt17-B1).